The primary structure comprises 58 residues: MAFPVLNLLLDVAVSSEAATNSAIGMIGSFLAAAAFIVVPAASFLIWVSQKDALERKR.

A helical membrane pass occupies residues Ile27 to Trp47.

This sequence belongs to the PsbX family. Type 2 subfamily. In terms of assembly, PSII consists of a core antenna complex that captures photons, and an electron transfer chain that converts photonic excitation into a charge separation. PSII forms dimeric complexes.

It localises to the cellular thylakoid membrane. In terms of biological role, involved in the binding and/or turnover of quinones at the Q(B) site of Photosystem II. This Prochlorococcus marinus (strain MIT 9211) protein is Photosystem II reaction center X protein.